Reading from the N-terminus, the 607-residue chain is Granule-bound starch synthase 1, chloroplastic/amyloplastic (607 aa).

Residues methionine 1–cysteine 77 constitute a chloroplast transit peptide. Residue lysine 95 coordinates ADP-alpha-D-glucose. The tract at residues serine 585–proline 607 is disordered.

Belongs to the glycosyltransferase 1 family. Bacterial/plant glycogen synthase subfamily.

Its subcellular location is the plastid. It localises to the chloroplast. The protein localises to the amyloplast. It carries out the reaction an NDP-alpha-D-glucose + [(1-&gt;4)-alpha-D-glucosyl](n) = [(1-&gt;4)-alpha-D-glucosyl](n+1) + a ribonucleoside 5'-diphosphate + H(+). The protein operates within glycan biosynthesis; starch biosynthesis. This is Granule-bound starch synthase 1, chloroplastic/amyloplastic (WAXY) from Solanum tuberosum (Potato).